The sequence spans 199 residues: uncharacterized protein (199 aa).

This is an uncharacterized protein from Borreliella burgdorferi (strain ATCC 35210 / DSM 4680 / CIP 102532 / B31) (Borrelia burgdorferi).